Reading from the N-terminus, the 191-residue chain is UPF0312 protein Shewmr4_1178 (191 aa).

The first 22 residues, Met1–Ala22, serve as a signal peptide directing secretion.

This sequence belongs to the UPF0312 family. Type 1 subfamily.

It is found in the periplasm. The sequence is that of UPF0312 protein Shewmr4_1178 from Shewanella sp. (strain MR-4).